The following is a 2194-amino-acid chain: MGAQVSRQQTGTHENANVATGGSSITYNQINFYKDSYAASASKQDFSQDPSKFTEPVAEALKAGAPVLKSPSAEACGYSDRVLQLKLGNSSIVTQEAANICCAYGEWPTYLPDNEAVAIDKPTQPETSTDRFYTLKSKKWESNSTGWWWKLPDALNQIGMFGQNVQYHYLYRSGFLCHVQCNATKFHQGTLLIVAIPEHQIGKKGTGTSASFAEVMKGAEGGVFEQPYLLDDGTSLACALVYPHQWINLRTNNSATIVLPWMNSAPMDFALRHNNWTLAVIPVCPLAGGTGNTNTYVPITISIAPMCAEYNGLRNAITQGVPTCLLPGSNQFLTTDDHSSAPAFPDFSPTPEMHIPGQVHSMLEIVQIESMMEINNVNDASGVERLRVQISAQSDMDQLLFNIPLDIQLEGPLRNTLLGNISRYYTHWSGSLEMTFMFCGSFMTTGKLIICYTPPGGSSPTDRMQAMLATHVVWDFGLQSSITIIIPWISGSHYRMFNTDAKAINANVGYVTCFMQTNLVAPVGAADQCYIVGMVAAKKDFNLRLMRDSPDIGQSAILPEQAATTQIGEIVKTVANTVESEIKAELGVIPSLNAVETGATSNTEPEEAIQTRTVINMHGTAECLVENFLGRSALVCMRSFEYKNHSTSTSSIQKNFFIWTLNTRELVQIRRKMELFTYLRFDTEITIVPTLRLFSSSNVSFSGLPNLTLQAMYVPTGARKPSSQDSFEWQSACNPSVFFKINDPPARLTIPFMSINSAYANFYDGFAGFEKKATVLYGINPANTMGNLCLRVVNSYQPVQYTLTVRVYMKPKHIKAWAPRAPRTMPYTNILNNNYAGRSAAPNAPTAIVSHRSTIKTMPNDINLTTAGPGYGGAFVGSYKIINYHLATDEEKERSVYVDWQSDVLVTTVAAHGKHQIARCRCNTGVYYCKHKNRSYPVCFEGPGIQWINESDYYPARYQTNTLLAMGPCQPGDCGGLLVCSHGVIGLVTAGGEGIVAFTDIRNLLWLEDDAMEQGITDYIQNLGSAFGTGFTETISEKAKEIQNMLVGEDSLLEKLLKALIKIVSAMVIVIRNSEDLVTVTATLALLGCNDSPWAFLKQKVCSYLGIPYTIRQSDSWLKKFTEACNALRGLDWLAQKIDKFINWLKTKILPEAREKHEFVQKLKQLPVIESQINTIEHSCPNSEXQQALFNNVQYYSHYCKKYAPLYALEAKRVSALERKINNYIQFKSKSRIEPVCLIIHGSPGTGKSVASNLIARAITEKLGGDSYSLPPDPKYFDGYKQQTVVLMDDLMQNPDGNDIAMFCQMVSTVDFIPPMASLEEKGTLYTSPFLIATTNAGSIHAPTVSDSKALARRFKFDMEIESMESYKDGVRLDMFKAVELCNPEKCRPTNYKKCCPLICGKAIQFRDKRTNVRYSVDMLVTEMIKEYRIRNSTQDKLEALFQGPPTFKEIKISVTPETPAPDAINDLLRSIDSQEVRDYCQKKGWIVMHPPTELVVDKHISRAFIALQAITTFVSIAGVVYVIYKLFAGIQGPYTGLPNQKPKVPTLRTAKVQGPSLDFAQAIMRKNTVIARTSKGEFTMLGIYDRIAVVPTHASVEEEIYINDVPVKVKDAYALRDINDVNLEITVVELDRNEKFRDIRGFLPKYEDDYNDAILSVNTSKFPNMYIPVGQTLNYGFLNLGGTPTHRILMYNFPTRAGQCGGVVTTTGKVIGIHVGGNGAQGFAAMLLQNYFTEKQGEIVSIEKTGVFINAPAKTKLEPSVFHEVFEGVKEPAVLHSKDKRLKVDFEEAIFSKYVGNKTMLMDEYMEEAVDHYVGCLEPLDISTEPIKLEEAMYGMDGLEALDLTTSAGYPYLLQGKKKRDIFNRQTRDTTEMTKMLDKYGVDLPFVTFVKDELRSREKVEKGKSRLIEASSLNDSVAMRVAFGNLYATFHKNPGVATGSAVGCDPDLFWSKIPVXLDGKIFAFDYTGYDASLSPVWFACLKKTLVKLGYTHQTAFVDYLCHSVHLYKDRKYIVNGGMPSGSSGTSIFNTMINNIIIRTLLLKVYKGIDLDQFKMIAYGDDVIASYPHEIDPGLLAKAGKEYGLIMTPADKSSGFTETTWENVTFLKRYFRADEQYPFLIHPVMPMKEIHESIRWTKDPRNTQDHVRSLCLLAWHNGEETYNEFCRKIRTVPVGRALALPVYSSLRRKWLDSF.

The tract at residues Met1–Thr20 is disordered. Gly2 is lipidated: N-myristoyl glycine; by host. Over Gly2–Gln1509 the chain is Cytoplasmic. Positions Leu558–Val574 are amphipathic alpha-helix. Catalysis depends on for protease 2A activity residues His885 and Asp903. Zn(2+) is bound by residues Cys920 and Cys922. Cys974 functions as the For protease 2A activity in the catalytic mechanism. Positions 980 and 982 each coordinate Zn(2+). The segment at Ser1114–Gln1186 is membrane-binding. Residues Ser1114–Ser1252 form an oligomerization region. The segment at Ala1135–Asp1139 is RNA-binding. One can recognise an SF3 helicase domain in the interval Glu1218–Asp1374. ATP is bound at residue Gly1242–Ser1249. Positions 1382, 1395, and 1400 each coordinate Zn(2+). A C4-type; degenerate zinc finger spans residues Cys1382 to Cys1400. The interval Glu1427–Thr1434 is RNA-binding. Positions Leu1438–Gln1443 are oligomerization. An intramembrane segment occupies Ala1510–Tyr1525. Topologically, residues Lys1526–Phe2194 are cytoplasmic. The residue at position 1535 (Tyr1535) is an O-(5'-phospho-RNA)-tyrosine. In terms of domain architecture, Peptidase C3 spans Gly1555–Phe1733. Active-site for protease 3C activity residues include His1594, Glu1625, and Cys1701. Positions Gly1960–Leu2075 constitute a RdRp catalytic domain. Mg(2+)-binding residues include Asp1966 and Asp2061.

Belongs to the picornaviruses polyprotein family. Interacts with capsid protein VP1 and capsid protein VP3 to form heterotrimeric protomers. As to quaternary structure, interacts with capsid protein VP0, and capsid protein VP3 to form heterotrimeric protomers. Five protomers subsequently associate to form pentamers which serve as building blocks for the capsid. Interacts with capsid protein VP2, capsid protein VP3 and capsid protein VP4 following cleavage of capsid protein VP0. In terms of assembly, interacts with capsid protein VP1 and capsid protein VP3 in the mature capsid. Interacts with capsid protein VP0 and capsid protein VP1 to form heterotrimeric protomers. Five protomers subsequently associate to form pentamers which serve as building blocks for the capsid. Interacts with capsid protein VP4 in the mature capsid. Interacts with protein 2C; this interaction may be important for virion morphogenesis. As to quaternary structure, interacts with capsid protein VP1 and capsid protein VP3. In terms of assembly, homodimer. Homohexamer; forms a hexameric ring structure with 6-fold symmetry characteristic of AAA+ ATPases. Interacts (via N-terminus) with host RTN3 (via reticulon domain); this interaction is important for viral replication. Interacts with capsid protein VP3; this interaction may be important for virion morphogenesis. As to quaternary structure, interacts with protein 3CD. In terms of assembly, homodimer. Interacts with host GBF1. Interacts (via GOLD domain) with host ACBD3 (via GOLD domain); this interaction allows the formation of a viral protein 3A/ACBD3 heterotetramer with a 2:2 stoichiometry, which will stimulate the recruitment of host PI4KB in order to synthesize PI4P at the viral RNA replication sites. Interacts with RNA-directed RNA polymerase. As to quaternary structure, interacts with protein 3AB and with RNA-directed RNA polymerase. In terms of assembly, interacts with Viral protein genome-linked and with protein 3CD. Mg(2+) is required as a cofactor. Post-translationally, specific enzymatic cleavages in vivo by the viral proteases yield processing intermediates and the mature proteins. Myristoylation is required for the formation of pentamers during virus assembly. Further assembly of 12 pentamers and a molecule of genomic RNA generates the provirion. In terms of processing, during virion maturation, immature virions are rendered infectious following cleavage of VP0 into VP4 and VP2. This maturation seems to be an autocatalytic event triggered by the presence of RNA in the capsid and it is followed by a conformational change infectious virion. Post-translationally, myristoylation is required during RNA encapsidation and formation of the mature virus particle. VPg is uridylylated by the polymerase into VPg-pUpU. This acts as a nucleotide-peptide primer for the genomic RNA replication.

The protein localises to the virion. Its subcellular location is the host cytoplasm. It is found in the host cytoplasmic vesicle membrane. The protein resides in the host nucleus. The enzyme catalyses a ribonucleoside 5'-triphosphate + H2O = a ribonucleoside 5'-diphosphate + phosphate + H(+). The catalysed reaction is Selective cleavage of Tyr-|-Gly bond in the picornavirus polyprotein.. It carries out the reaction RNA(n) + a ribonucleoside 5'-triphosphate = RNA(n+1) + diphosphate. It catalyses the reaction Selective cleavage of Gln-|-Gly bond in the poliovirus polyprotein. In other picornavirus reactions Glu may be substituted for Gln, and Ser or Thr for Gly.. Its activity is regulated as follows. Replication or transcription is subject to high level of random mutations by the nucleotide analog ribavirin. In terms of biological role, forms an icosahedral capsid of pseudo T=3 symmetry with capsid proteins VP2 and VP3. The capsid is 300 Angstroms in diameter, composed of 60 copies of each capsid protein and enclosing the viral positive strand RNA genome. Capsid protein VP1 mainly forms the vertices of the capsid. Capsid protein VP1 interacts with host cell receptor to provide virion attachment to target host cells. This attachment induces virion internalization. Tyrosine kinases are probably involved in the entry process. After binding to its receptor, the capsid undergoes conformational changes. Capsid protein VP1 N-terminus (that contains an amphipathic alpha-helix) and capsid protein VP4 are externalized. Together, they shape a pore in the host membrane through which viral genome is translocated to host cell cytoplasm. Its function is as follows. Forms an icosahedral capsid of pseudo T=3 symmetry with capsid proteins VP2 and VP3. The capsid is 300 Angstroms in diameter, composed of 60 copies of each capsid protein and enclosing the viral positive strand RNA genome. Lies on the inner surface of the capsid shell. After binding to the host receptor, the capsid undergoes conformational changes. Capsid protein VP4 is released, Capsid protein VP1 N-terminus is externalized, and together, they shape a pore in the host membrane through which the viral genome is translocated into the host cell cytoplasm. Functionally, component of immature procapsids, which is cleaved into capsid proteins VP4 and VP2 after maturation. Allows the capsid to remain inactive before the maturation step. In terms of biological role, cysteine protease that cleaves viral polyprotein and specific host proteins. It is responsible for the autocatalytic cleavage between the P1 and P2 regions, which is the first cleavage occurring in the polyprotein. Also cleaves the host translation initiation factor EIF4G1, in order to shut down the capped cellular mRNA translation. Inhibits the host nucleus-cytoplasm protein and RNA trafficking by cleaving host members of the nuclear pores. Counteracts stress granule formation probably by antagonizing its assembly or promoting its dissassembly. Its function is as follows. Plays an essential role in the virus replication cycle by acting as a viroporin. Creates a pore in the host endoplasmic reticulum and as a consequence releases Ca2+ in the cytoplasm of infected cell. In turn, high levels of cytoplasmic calcium may trigger membrane trafficking and transport of viral ER-associated proteins to viroplasms, sites of viral genome replication. Induces and associates with structural rearrangements of intracellular membranes. Displays RNA-binding, nucleotide binding and NTPase activities. May play a role in virion morphogenesis and viral RNA encapsidation by interacting with the capsid protein VP3. Functionally, localizes the viral replication complex to the surface of membranous vesicles. Together with protein 3CD binds the Cis-Active RNA Element (CRE) which is involved in RNA synthesis initiation. Acts as a cofactor to stimulate the activity of 3D polymerase, maybe through a nucleid acid chaperone activity. In terms of biological role, localizes the viral replication complex to the surface of membranous vesicles. It inhibits host cell endoplasmic reticulum-to-Golgi apparatus transport and causes the disassembly of the Golgi complex, possibly through GBF1 interaction. This would result in depletion of MHC, trail receptors and IFN receptors at the host cell surface. Plays an essential role in viral RNA replication by recruiting ACBD3 and PI4KB at the viral replication sites, thereby allowing the formation of the rearranged membranous structures where viral replication takes place. Its function is as follows. Acts as a primer for viral RNA replication and remains covalently bound to viral genomic RNA. VPg is uridylylated prior to priming replication into VPg-pUpU. The oriI viral genomic sequence may act as a template for this. The VPg-pUpU is then used as primer on the genomic RNA poly(A) by the RNA-dependent RNA polymerase to replicate the viral genome. During genome replication, the VPg-RNA linkage is removed by the host TDP2, thereby accelerating replication. During the late stage of the replication cycle, host TDP2 is excluded from sites of viral RNA synthesis and encapsidation, allowing for the generation of progeny virions. Involved in the viral replication complex and viral polypeptide maturation. It exhibits protease activity with a specificity and catalytic efficiency that is different from protease 3C. Protein 3CD lacks polymerase activity. The 3C domain in the context of protein 3CD may have an RNA binding activity. Protein 3CD binds to the 5'UTR of the viral genome. Functionally, replicates the viral genomic RNA on the surface of intracellular membranes. May form linear arrays of subunits that propagate along a strong head-to-tail interaction called interface-I. Covalently attaches UMP to a tyrosine of VPg, which is used to prime RNA synthesis. The positive stranded RNA genome is first replicated at virus induced membranous vesicles, creating a dsRNA genomic replication form. This dsRNA is then used as template to synthesize positive stranded RNA genomes. ss(+)RNA genomes are either translated, replicated or encapsidated. In terms of biological role, major viral protease that mediates proteolytic processing of the polyprotein. Cleaves host EIF5B, contributing to host translation shutoff. Also cleaves host PABPC1, contributing to host translation shutoff. Cleaves host NLRP1, triggers host N-glycine-mediated degradation of the autoinhibitory NLRP1 N-terminal fragment. This Homo sapiens (Human) protein is Genome polyprotein.